The primary structure comprises 122 residues: Large ribosomal subunit protein uL14 (122 aa).

Belongs to the universal ribosomal protein uL14 family. Part of the 50S ribosomal subunit. Forms a cluster with proteins L3 and L19. In the 70S ribosome, L14 and L19 interact and together make contacts with the 16S rRNA in bridges B5 and B8.

Binds to 23S rRNA. Forms part of two intersubunit bridges in the 70S ribosome. In Bacillus mycoides (strain KBAB4) (Bacillus weihenstephanensis), this protein is Large ribosomal subunit protein uL14.